The following is a 62-amino-acid chain: Short neurotoxin 1 (62 aa).

Positions 1 to 20 are disordered; the sequence is LECHNQQSSEPPTTTRCSGG. Disulfide bonds link C3/C24, C17/C41, C43/C54, and C55/C60.

The protein belongs to the three-finger toxin family. Short-chain subfamily. Type I alpha-neurotoxin sub-subfamily. As to expression, expressed by the venom gland.

Its subcellular location is the secreted. Binds to muscle nicotinic acetylcholine receptor (nAChR) and inhibit acetylcholine from binding to the receptor, thereby impairing neuromuscular transmission. In Naja mossambica (Mozambique spitting cobra), this protein is Short neurotoxin 1.